The chain runs to 494 residues: Ribose import ATP-binding protein RbsA (494 aa).

ABC transporter domains follow at residues 3-240 and 250-494; these read IEMK…VGRS and SQIS…TGGE. 35–42 serves as a coordination point for ATP; that stretch reads GENGAGKS.

The protein belongs to the ABC transporter superfamily. Ribose importer (TC 3.A.1.2.1) family. The complex is composed of an ATP-binding protein (RbsA), two transmembrane proteins (RbsC) and a solute-binding protein (RbsB).

Its subcellular location is the cell membrane. It carries out the reaction D-ribose(out) + ATP + H2O = D-ribose(in) + ADP + phosphate + H(+). Part of the ABC transporter complex RbsABC involved in ribose import. Responsible for energy coupling to the transport system. This Bacillus cereus (strain ZK / E33L) protein is Ribose import ATP-binding protein RbsA.